We begin with the raw amino-acid sequence, 373 residues long: Phosphoserine aminotransferase (373 aa).

Position 46 (Arg-46) interacts with L-glutamate. The pyridoxal 5'-phosphate site is built by Phe-104, Thr-150, Asp-172, and Gln-195. At Lys-196 the chain carries N6-(pyridoxal phosphate)lysine. Position 247–248 (247–248 (NT)) interacts with pyridoxal 5'-phosphate.

The protein belongs to the class-V pyridoxal-phosphate-dependent aminotransferase family. SerC subfamily. Homodimer. It depends on pyridoxal 5'-phosphate as a cofactor.

Its subcellular location is the cytoplasm. It catalyses the reaction O-phospho-L-serine + 2-oxoglutarate = 3-phosphooxypyruvate + L-glutamate. The catalysed reaction is 4-(phosphooxy)-L-threonine + 2-oxoglutarate = (R)-3-hydroxy-2-oxo-4-phosphooxybutanoate + L-glutamate. The protein operates within amino-acid biosynthesis; L-serine biosynthesis; L-serine from 3-phospho-D-glycerate: step 2/3. It functions in the pathway cofactor biosynthesis; pyridoxine 5'-phosphate biosynthesis; pyridoxine 5'-phosphate from D-erythrose 4-phosphate: step 3/5. Its function is as follows. Catalyzes the reversible conversion of 3-phosphohydroxypyruvate to phosphoserine and of 3-hydroxy-2-oxo-4-phosphonooxybutanoate to phosphohydroxythreonine. This Rhodococcus opacus (strain B4) protein is Phosphoserine aminotransferase.